Consider the following 501-residue polypeptide: COP9 signalosome complex subunit 3 (501 aa).

Positions 275–445 (RFEDALFLLE…VFWTELSPVP (171 aa)) constitute a PCI domain.

It belongs to the CSN3 family. Component of the CSN complex, probably composed of csn-1, csn-2, csn-3, csn-4, csn-5, csn-6 and csn-7. Within the complex it probably interacts directly with csn-2 and csn-4. May interact with itself.

Its subcellular location is the cytoplasm. The protein localises to the nucleus. In terms of biological role, component of the COP9 signalosome complex (CSN), a complex involved in various cellular and developmental processes. The CSN complex is an essential regulator of the ubiquitin (Ubl) conjugation pathway by mediating the deneddylation of the cullin subunits of the SCF-type E3 ligase complexes, leading to decrease the Ubl ligase activity of SCF. The CSN complex plays an essential role in embryogenesis and oogenesis and is required to regulate microtubule stability in the early embryo. Mediates mei-3/katanin targeting for degradation at the meiosis to mitosis transition via deneddylation of cul-3. The sequence is that of COP9 signalosome complex subunit 3 (csn-3) from Caenorhabditis elegans.